Consider the following 306-residue polypeptide: 4-hydroxy-tetrahydrodipicolinate synthase (306 aa).

Thr-49 provides a ligand contact to pyruvate. The active-site Proton donor/acceptor is Tyr-136. The active-site Schiff-base intermediate with substrate is the Lys-164. Ile-207 contacts pyruvate.

It belongs to the DapA family. As to quaternary structure, homotetramer; dimer of dimers.

It localises to the cytoplasm. The enzyme catalyses L-aspartate 4-semialdehyde + pyruvate = (2S,4S)-4-hydroxy-2,3,4,5-tetrahydrodipicolinate + H2O + H(+). It participates in amino-acid biosynthesis; L-lysine biosynthesis via DAP pathway; (S)-tetrahydrodipicolinate from L-aspartate: step 3/4. In terms of biological role, catalyzes the condensation of (S)-aspartate-beta-semialdehyde [(S)-ASA] and pyruvate to 4-hydroxy-tetrahydrodipicolinate (HTPA). The chain is 4-hydroxy-tetrahydrodipicolinate synthase from Haloarcula marismortui (strain ATCC 43049 / DSM 3752 / JCM 8966 / VKM B-1809) (Halobacterium marismortui).